A 313-amino-acid chain; its full sequence is Putative S-adenosyl-L-methionine-dependent methyltransferase MAP_4064c (313 aa).

Residues Asp129 and 158 to 159 each bind S-adenosyl-L-methionine; that span reads DL.

Belongs to the UPF0677 family.

Its function is as follows. Exhibits S-adenosyl-L-methionine-dependent methyltransferase activity. In Mycolicibacterium paratuberculosis (strain ATCC BAA-968 / K-10) (Mycobacterium paratuberculosis), this protein is Putative S-adenosyl-L-methionine-dependent methyltransferase MAP_4064c.